The sequence spans 706 residues: Glycogen [starch] synthase (706 aa).

Position 26 (R26) interacts with UDP. The UDP-alpha-D-glucose site is built by H191 and R197. H277, E278, Q280, H283, and K287 together coordinate alpha-D-glucose 6-phosphate. R317 provides a ligand contact to UDP. R317 serves as a coordination point for UDP-alpha-D-glucose. Position 491 (H491) interacts with alpha-D-glucose 6-phosphate. The UDP-alpha-D-glucose site is built by E500, W502, and G503. UDP is bound at residue T505. The alpha-D-glucose 6-phosphate site is built by R572 and R576. The disordered stretch occupies residues P670–R706.

The protein belongs to the glycosyltransferase 3 family. As to quaternary structure, interacts with glucogenin gnn; the interaction is direct.

The enzyme catalyses [(1-&gt;4)-alpha-D-glucosyl](n) + UDP-alpha-D-glucose = [(1-&gt;4)-alpha-D-glucosyl](n+1) + UDP + H(+). It functions in the pathway glycan biosynthesis; glycogen biosynthesis. Its activity is regulated as follows. Allosteric activation by glucose-6-phosphate, and phosphorylation by a cAMP-dependent kinase. Its function is as follows. Glycogen synthase participates in the glycogen biosynthetic process along with glycogenin and glycogen branching enzyme. Extends the primer composed of a few glucose units formed by glycogenin by adding new glucose units to it. In this context, glycogen synthase transfers the glycosyl residue from UDP-Glc to the non-reducing end of alpha-1,4-glucan. The polypeptide is Glycogen [starch] synthase (gsy-1) (Neurospora crassa (strain ATCC 24698 / 74-OR23-1A / CBS 708.71 / DSM 1257 / FGSC 987)).